Consider the following 310-residue polypeptide: Methionyl-tRNA formyltransferase (310 aa).

S109–P112 is a binding site for (6S)-5,6,7,8-tetrahydrofolate.

The protein belongs to the Fmt family.

The catalysed reaction is L-methionyl-tRNA(fMet) + (6R)-10-formyltetrahydrofolate = N-formyl-L-methionyl-tRNA(fMet) + (6S)-5,6,7,8-tetrahydrofolate + H(+). Attaches a formyl group to the free amino group of methionyl-tRNA(fMet). The formyl group appears to play a dual role in the initiator identity of N-formylmethionyl-tRNA by promoting its recognition by IF2 and preventing the misappropriation of this tRNA by the elongation apparatus. The chain is Methionyl-tRNA formyltransferase from Alkaliphilus oremlandii (strain OhILAs) (Clostridium oremlandii (strain OhILAs)).